Consider the following 426-residue polypeptide: uncharacterized protein (426 aa).

The disordered stretch occupies residues 23 to 42 (ENPRPTNNPSTSHPSDSYST). A compositionally biased stretch (polar residues) spans 26 to 42 (RPTNNPSTSHPSDSYST).

The protein belongs to the serpin family.

This is an uncharacterized protein from Thermococcus kodakarensis (strain ATCC BAA-918 / JCM 12380 / KOD1) (Pyrococcus kodakaraensis (strain KOD1)).